The following is a 354-amino-acid chain: MGRLVAVGLLGIALALLGERLLALRNRLKASREVESVDLPHCHLIKGIEAGSEDIDILPNGLAFFSVGLKFPGLHSFAPDKPGGILMMDLKEEKPRARELRISRGFDLASFNPHGISTFIDNDDTVYLFVVNHPEFKNTVEIFKFEEAENSLLHLKTVKHELLPSVNDITAVGPAHFYATNDHYFSDPFLKYLETYLNLHWANVVYYSPNEVKVVAEGFDSANGINISPDDKYIYVADILAHEIHVLEKHTNMNLTQLKVLELDTLVDNLSIDPSSGDIWVGCHPNGQKLFVYDPNNPPSSEVLRIQNILSEKPTVTTVYANNGSVLQGSSVASVYDGKLLIGTLYHRALYCEL.

Cysteines 42 and 352 form a disulfide. 2 residues coordinate Ca(2+): Glu-53 and Asp-54. Residue His-114 is the Proton acceptor of the active site. Residues Ile-116, Asn-167, Asp-168, and Asn-223 each coordinate Ca(2+). Residue Asn-254 is glycosylated (N-linked (GlcNAc...) asparagine). Asp-268 and Asn-269 together coordinate Ca(2+). Residues Asn-269 and Asn-323 are each glycosylated (N-linked (GlcNAc...) asparagine).

It belongs to the paraoxonase family. Homotrimer. The cofactor is Ca(2+). In terms of processing, the signal sequence is not cleaved. Widely expressed with highest expression in liver, lung, placenta, testis and heart.

The protein localises to the membrane. The enzyme catalyses a phenyl acetate + H2O = a phenol + acetate + H(+). The catalysed reaction is an N-acyl-L-homoserine lactone + H2O = an N-acyl-L-homoserine + H(+). Its function is as follows. Capable of hydrolyzing lactones and a number of aromatic carboxylic acid esters. Has antioxidant activity. Is not associated with high density lipoprotein. Prevents LDL lipid peroxidation, reverses the oxidation of mildly oxidized LDL, and inhibits the ability of MM-LDL to induce monocyte chemotaxis. The sequence is that of Serum paraoxonase/arylesterase 2 (PON2) from Homo sapiens (Human).